The primary structure comprises 339 residues: UDP-N-acetylenolpyruvoylglucosamine reductase (339 aa).

The FAD-binding PCMH-type domain maps to 16-188 (GIAATARYYS…LQVTLRLNKQ (173 aa)). The active site involves arginine 164. The Proton donor role is filled by serine 238. Glutamate 334 is an active-site residue.

Belongs to the MurB family. The cofactor is FAD.

The protein resides in the cytoplasm. It carries out the reaction UDP-N-acetyl-alpha-D-muramate + NADP(+) = UDP-N-acetyl-3-O-(1-carboxyvinyl)-alpha-D-glucosamine + NADPH + H(+). Its pathway is cell wall biogenesis; peptidoglycan biosynthesis. Its function is as follows. Cell wall formation. This is UDP-N-acetylenolpyruvoylglucosamine reductase from Amoebophilus asiaticus (strain 5a2).